A 417-amino-acid polypeptide reads, in one-letter code: MSLSKKLTLDKLDVKGKRIIMRVDFNVPMKKNQITNNQRIKASIPSIKYCLDNGARSVVLMSHLGRPDGVPMPDKYSLEPVAAELKSLLGKDVLFLKDCVGSEVEKACANPATGSVILLENLRFHVEEEGKGQDPSGNKLKAEAGKIEAFRASLSKLGDVYVNDAFGTAHRAHSSMVGINLPQKASGFLMKKELEYFAKALENPERPFLAILGGAKVADKIQLIKNMLDKVNEMIIGGGMAYTFLKVLNNMEIGASLFDEEGAKIVKDIMAKANKNGVRITFPVDFVTADKFEENAKVGQATVASGIPAGWMGLDCGPETNKKYAQVMAQAKLIVWNGPVGVFEWDAFAKGTKALMDEIVKATSRGCITIIGGGDTATCCAKWNTEDKVSHVSTGGGASLELLEGKILPGVDALSNL.

S2 bears the N-acetylserine mark. A phosphoserine mark is found at S2 and S4. K11 bears the N6-acetyllysine mark. (2R)-3-phosphoglycerate is bound by residues V23, D24, F25, N26, Q38, and R39. K48 is subject to N6-acetyllysine. 4 residues coordinate (2R)-3-phosphoglycerate: S62, H63, G65, and R66. Residues K75, K86, and K97 each carry the N6-acetyllysine modification. Residues L122 and R123 each coordinate (2R)-3-phosphoglycerate. K131 and K146 each carry N6-acetyllysine. Positions 170 and 171 each coordinate (2R)-3-phosphoglycerate. Phosphotyrosine is present on Y196. K199 is subject to N6-acetyllysine. Residue G214 coordinates ADP. G214 lines the CDP pocket. A215 and K216 together coordinate AMP. A215 provides a ligand contact to ATP. Position 215 (A215) interacts with Mg(2+). Mg(2+)-binding residues include A218 and D219. Residue D219 participates in CDP binding. K220 lines the AMP pocket. K220 serves as a coordination point for ATP. Position 238 (G238) interacts with ADP. G238 contacts CDP. G239 serves as a coordination point for AMP. G239 lines the ATP pocket. N6-acetyllysine is present on residues K267 and K291. G313 provides a ligand contact to AMP. G313 serves as a coordination point for ATP. CDP contacts are provided by G338, V340, and F343. Position 343 (F343) interacts with ADP. E344 lines the AMP pocket. 3 residues coordinate ATP: E344, D375, and T376. Position 375 (D375) interacts with Mg(2+).

The protein belongs to the phosphoglycerate kinase family. In terms of assembly, monomer. Requires Mg(2+) as cofactor.

It localises to the cytoplasm. The catalysed reaction is (2R)-3-phosphoglycerate + ATP = (2R)-3-phospho-glyceroyl phosphate + ADP. Its pathway is carbohydrate degradation; glycolysis; pyruvate from D-glyceraldehyde 3-phosphate: step 2/5. Its function is as follows. Essential for sperm motility and male fertility but is not required for the completion of spermatogenesis. The protein is Phosphoglycerate kinase 2 (PGK2) of Equus caballus (Horse).